The primary structure comprises 148 residues: UPF0756 membrane protein YeaL (148 aa).

Helical transmembrane passes span 14-34 (ALGFISHNTTVAVSILVLIIV), 51-71 (LTVGIIILTIGVMAPIASGTL), 86-106 (LVAIAVGVFVSWLGGRGVALM), and 121-141 (VLGVALFRGVPVGPLIAAGLV).

This sequence belongs to the UPF0756 family.

It is found in the cell membrane. In Salmonella arizonae (strain ATCC BAA-731 / CDC346-86 / RSK2980), this protein is UPF0756 membrane protein YeaL.